The chain runs to 114 residues: Beta-microseminoprotein J1 (114 aa).

Residues 1 to 20 form the signal peptide; that stretch reads MNVLLGGLVIFATFVTLCNA. Cystine bridges form between Cys22-Cys70, Cys38-Cys62, Cys57-Cys93, Cys60-Cys69, and Cys84-Cys107.

It belongs to the beta-microseminoprotein family.

The protein localises to the secreted. The polypeptide is Beta-microseminoprotein J1 (MSPJ) (Saguinus oedipus (Cotton-top tamarin)).